The following is an 806-amino-acid chain: Lon protease (806 aa).

One can recognise a Lon N-terminal domain in the interval 13–206 (LPMMPIRDVV…RVAEMLDIEI (194 aa)). 356–363 (GPPGVGKT) contacts ATP. The 182-residue stretch at 599–780 (KNEIGAATGL…DEVLKIALER (182 aa)) folds into the Lon proteolytic domain. Residues Ser-686 and Lys-729 contribute to the active site.

Belongs to the peptidase S16 family. Homohexamer. Organized in a ring with a central cavity.

The protein resides in the cytoplasm. It catalyses the reaction Hydrolysis of proteins in presence of ATP.. In terms of biological role, ATP-dependent serine protease that mediates the selective degradation of mutant and abnormal proteins as well as certain short-lived regulatory proteins. Required for cellular homeostasis and for survival from DNA damage and developmental changes induced by stress. Degrades polypeptides processively to yield small peptide fragments that are 5 to 10 amino acids long. Binds to DNA in a double-stranded, site-specific manner. The polypeptide is Lon protease (Solibacter usitatus (strain Ellin6076)).